The primary structure comprises 571 residues: Dihydroxy-acid dehydratase (571 aa).

A [2Fe-2S] cluster-binding site is contributed by cysteine 56. Aspartate 88 serves as a coordination point for Mg(2+). Residue cysteine 129 coordinates [2Fe-2S] cluster. Mg(2+) is bound by residues aspartate 130 and lysine 131. Lysine 131 is subject to N6-carboxylysine. Cysteine 201 contacts [2Fe-2S] cluster. Residue glutamate 452 coordinates Mg(2+). Serine 478 serves as the catalytic Proton acceptor.

This sequence belongs to the IlvD/Edd family. As to quaternary structure, homodimer. The cofactor is [2Fe-2S] cluster. Requires Mg(2+) as cofactor.

It catalyses the reaction (2R)-2,3-dihydroxy-3-methylbutanoate = 3-methyl-2-oxobutanoate + H2O. It carries out the reaction (2R,3R)-2,3-dihydroxy-3-methylpentanoate = (S)-3-methyl-2-oxopentanoate + H2O. It participates in amino-acid biosynthesis; L-isoleucine biosynthesis; L-isoleucine from 2-oxobutanoate: step 3/4. The protein operates within amino-acid biosynthesis; L-valine biosynthesis; L-valine from pyruvate: step 3/4. Its function is as follows. Functions in the biosynthesis of branched-chain amino acids. Catalyzes the dehydration of (2R,3R)-2,3-dihydroxy-3-methylpentanoate (2,3-dihydroxy-3-methylvalerate) into 2-oxo-3-methylpentanoate (2-oxo-3-methylvalerate) and of (2R)-2,3-dihydroxy-3-methylbutanoate (2,3-dihydroxyisovalerate) into 2-oxo-3-methylbutanoate (2-oxoisovalerate), the penultimate precursor to L-isoleucine and L-valine, respectively. In Streptococcus mutans serotype c (strain ATCC 700610 / UA159), this protein is Dihydroxy-acid dehydratase.